A 265-amino-acid chain; its full sequence is Apolipoprotein A-I (265 aa).

Positions 1–18 (MKALVLTLAVLFFTGSQA) are cleaved as a signal peptide. Tandem repeats lie at residues 67–88 (LKLLDNWDSLTSTFAKVREQLG) and 89–110 (PVTQEFWDNLEKETESLRQEMN). The interval 67–265 (LKLLDNWDSL…DEASKKLNAQ (199 aa)) is 10 X approximate tandem repeats. Methionine 109 carries the methionine sulfoxide modification. Residues 111–121 (KDLEEVKQKVQ) form a 3; half-length repeat. A run of 5 repeats spans residues 122-142 (PYLDEFKRKWQEELQIYRQKV), 144-165 (PLGEELREGARQKVQELQDKLT), 166-187 (PLAEEMRDRARAHVETLRQQLA), 188-209 (PYSDDLRQRMATRFEVLKEGGG), and 210-230 (SLAEYHAKASEQLKALGEKAK). One copy of the 9; half-length repeat lies at 231–241 (PALEDLRQGLL). Copy 10 of the repeat occupies 242-265 (PVLESLKVSILAAIDEASKKLNAQ).

Belongs to the apolipoprotein A1/A4/E family. Homodimer. Interacts with APOA1BP and CLU. Component of a sperm activating protein complex (SPAP), consisting of APOA1, an immunoglobulin heavy chain, an immunoglobulin light chain and albumin. Interacts with NDRG1. Interacts with SCGB3A2. Interacts with NAXE and YJEFN3. Glycosylated. In terms of processing, palmitoylated. Post-translationally, phosphorylation sites are present in the extracellular medium. As to expression, major protein of plasma HDL, also found in chylomicrons.

Its subcellular location is the secreted. Functionally, participates in the reverse transport of cholesterol from tissues to the liver for excretion by promoting cholesterol efflux from tissues and by acting as a cofactor for the lecithin cholesterol acyltransferase (LCAT). As part of the SPAP complex, activates spermatozoa motility. In Physeter macrocephalus (Sperm whale), this protein is Apolipoprotein A-I (APOA1).